Reading from the N-terminus, the 23-residue chain is Phallacidin proprotein (23 aa).

A propeptide is located at residue proline 1. Residues 2 to 8 constitute a cross-link (cyclopeptide (Ala-Pro)); the sequence is AWLVDCP. The 2'-cysteinyl-6'-hydroxytryptophan sulfoxide (Trp-Cys) cross-link spans 3–7; it reads WLVDC. A propeptide spanning residues 9 to 23 is cleaved from the precursor; it reads CVGDDISRLLTRGEK.

It belongs to the MSDIN fungal toxin family. Processed by the macrocyclase-peptidase enzyme POPB to yield a toxic cyclic heptapeptide. POPB first removes 10 residues from the N-terminus. Conformational trapping of the remaining peptide forces the enzyme to release this intermediate rather than proceed to macrocyclization. The enzyme rebinds the remaining peptide in a different conformation and catalyzes macrocyclization of the N-terminal 7 residues.

Functionally, major toxin that belongs to the bicyclic heptapeptides called phallotoxins. Although structurally related to amatoxins, phallotoxins have a different mode of action, which is the stabilization of F-actin. Phallotoxins are poisonous when administered parenterally, but not orally because of poor absorption. This Amanita rimosa protein is Phallacidin proprotein.